The primary structure comprises 206 residues: Peptidyl-tRNA hydrolase (206 aa).

Tyr14 contacts tRNA. His19 functions as the Proton acceptor in the catalytic mechanism. Residues Phe64 and Asn66 each coordinate tRNA. A disordered region spans residues 185-206 (VNGEAPKKSKDQAKEPANEQPR). A compositionally biased stretch (basic and acidic residues) spans 189–206 (APKKSKDQAKEPANEQPR).

This sequence belongs to the PTH family. Monomer.

It localises to the cytoplasm. The catalysed reaction is an N-acyl-L-alpha-aminoacyl-tRNA + H2O = an N-acyl-L-amino acid + a tRNA + H(+). Hydrolyzes ribosome-free peptidyl-tRNAs (with 1 or more amino acids incorporated), which drop off the ribosome during protein synthesis, or as a result of ribosome stalling. Functionally, catalyzes the release of premature peptidyl moieties from peptidyl-tRNA molecules trapped in stalled 50S ribosomal subunits, and thus maintains levels of free tRNAs and 50S ribosomes. In Herpetosiphon aurantiacus (strain ATCC 23779 / DSM 785 / 114-95), this protein is Peptidyl-tRNA hydrolase.